The sequence spans 872 residues: Probable GPI-anchored adhesin-like protein PGA25 (872 aa).

An N-terminal signal peptide occupies residues 1-19 (MKVTAVSSVLLTVAALTNA). Positions 43-65 (PAAAPAAQPAAQPTTQSPADQPT) are enriched in low complexity. 3 disordered regions span residues 43–383 (PAAA…TIIP), 492–517 (KPTG…DETD), and 623–809 (PDDW…ECDT). A compositionally biased stretch (polar residues) spans 66-83 (VQSPVSSDQPSTAQPVAQ). Low complexity-rich tracts occupy residues 84 to 110 (NNLL…TRST) and 125 to 171 (SSEA…SSSS). Asn92 is a glycosylation site (N-linked (GlcNAc...) asparagine). The segment covering 196–207 (ETDDEDCVEETE) has biased composition (acidic residues). Composition is skewed to low complexity over residues 208-225 (SPTS…VATT), 242-260 (SSAP…SSTT), and 274-293 (SSVP…NTTT). N-linked (GlcNAc...) asparagine glycosylation occurs at Asn290. A compositionally biased stretch (acidic residues) spans 317 to 328 (AEEDDEECEDPT). Over residues 349 to 363 (TSQSKTSVSSVVSKS) the composition is skewed to low complexity. The span at 366–376 (EDDDDETECET) shows a compositional bias: acidic residues. The segment covering 495–506 (GSGSITVLPTKS) has biased composition (polar residues). Composition is skewed to acidic residues over residues 624 to 635 (DDWEDDGYEGED) and 646 to 659 (DDGE…DDGE). 3 stretches are compositionally biased toward gly residues: residues 666-692 (SSSG…GSGS), 701-710 (SSGGTWGGSG), and 731-740 (SWWGGSGSGS). Residues 741–760 (SSGSSSGVSSGDSGSSSVTG) show a composition bias toward low complexity. Residues 761–771 (GSSGSWWGGSG) are compositionally biased toward gly residues. Residues 780–808 (DGYDDEDDQTPEPECDDEDDSWDDDEECD) show a composition bias toward acidic residues. Residue Ala845 is the site of GPI-anchor amidated alanine attachment. The propeptide at 846-872 (QSVTQIENIGGKVSASGLFVVLGLLLI) is removed in mature form.

This sequence belongs to the HYR1/IFF family. Post-translationally, the GPI-anchor is attached to the protein in the endoplasmic reticulum and serves to target the protein to the cell surface. There, the glucosamine-inositol phospholipid moiety is cleaved off and the GPI-modified mannoprotein is covalently attached via its lipidless GPI glycan remnant to the 1,6-beta-glucan of the outer cell wall layer.

It is found in the secreted. Its subcellular location is the cell wall. The protein localises to the membrane. Its function is as follows. Probable GPI-anchored cell wall protein involved in cell wall organization, hyphal growth, as well as in host-fungal interaction and virulence. The chain is Probable GPI-anchored adhesin-like protein PGA25 (PGA25) from Candida albicans (strain SC5314 / ATCC MYA-2876) (Yeast).